Consider the following 348-residue polypeptide: Dihydroorotase (348 aa).

Histidine 17 and histidine 19 together coordinate Zn(2+). Residues 19–21 and asparagine 45 each bind substrate; that span reads HLR. Zn(2+) is bound by residues lysine 103, histidine 140, and histidine 178. Residue lysine 103 is modified to N6-carboxylysine. Substrate is bound at residue histidine 140. Leucine 223 lines the substrate pocket. Residue aspartate 251 coordinates Zn(2+). Residue aspartate 251 is part of the active site. Residues histidine 255 and alanine 267 each contribute to the substrate site.

Belongs to the metallo-dependent hydrolases superfamily. DHOase family. Class II DHOase subfamily. In terms of assembly, homodimer. The cofactor is Zn(2+).

The catalysed reaction is (S)-dihydroorotate + H2O = N-carbamoyl-L-aspartate + H(+). It functions in the pathway pyrimidine metabolism; UMP biosynthesis via de novo pathway; (S)-dihydroorotate from bicarbonate: step 3/3. Catalyzes the reversible cyclization of carbamoyl aspartate to dihydroorotate. This chain is Dihydroorotase, found in Edwardsiella ictaluri (strain 93-146).